The sequence spans 345 residues: Phosphoribosylformylglycinamidine cyclo-ligase (345 aa).

The protein belongs to the AIR synthase family.

The protein localises to the cytoplasm. The enzyme catalyses 2-formamido-N(1)-(5-O-phospho-beta-D-ribosyl)acetamidine + ATP = 5-amino-1-(5-phospho-beta-D-ribosyl)imidazole + ADP + phosphate + H(+). Its pathway is purine metabolism; IMP biosynthesis via de novo pathway; 5-amino-1-(5-phospho-D-ribosyl)imidazole from N(2)-formyl-N(1)-(5-phospho-D-ribosyl)glycinamide: step 2/2. This Pectobacterium atrosepticum (strain SCRI 1043 / ATCC BAA-672) (Erwinia carotovora subsp. atroseptica) protein is Phosphoribosylformylglycinamidine cyclo-ligase.